The primary structure comprises 67 residues: Large ribosomal subunit protein bL35 (67 aa).

This sequence belongs to the bacterial ribosomal protein bL35 family.

The protein is Large ribosomal subunit protein bL35 of Leptospira interrogans serogroup Icterohaemorrhagiae serovar Lai (strain 56601).